The primary structure comprises 564 residues: Arginine--tRNA ligase (564 aa).

Residues 136–146 (ANPTGPLHMGN) carry the 'HIGH' region motif.

The protein belongs to the class-I aminoacyl-tRNA synthetase family. Monomer.

Its subcellular location is the cytoplasm. It catalyses the reaction tRNA(Arg) + L-arginine + ATP = L-arginyl-tRNA(Arg) + AMP + diphosphate. The chain is Arginine--tRNA ligase from Ruminiclostridium cellulolyticum (strain ATCC 35319 / DSM 5812 / JCM 6584 / H10) (Clostridium cellulolyticum).